The sequence spans 119 residues: Large ribosomal subunit protein uL22 (119 aa).

Belongs to the universal ribosomal protein uL22 family. Part of the 50S ribosomal subunit.

This protein binds specifically to 23S rRNA; its binding is stimulated by other ribosomal proteins, e.g. L4, L17, and L20. It is important during the early stages of 50S assembly. It makes multiple contacts with different domains of the 23S rRNA in the assembled 50S subunit and ribosome. Functionally, the globular domain of the protein is located near the polypeptide exit tunnel on the outside of the subunit, while an extended beta-hairpin is found that lines the wall of the exit tunnel in the center of the 70S ribosome. This chain is Large ribosomal subunit protein uL22, found in Rickettsia typhi (strain ATCC VR-144 / Wilmington).